A 372-amino-acid chain; its full sequence is Innexin-16 (372 aa).

The next 4 membrane-spanning stretches (helical) occupy residues 31–51, 106–126, 181–201, and 263–283; these read VVTTSILIAFSLLLFAKNYVG, VPFLLVIQALFFCVPRAFWII, LVMKLLILLNIVLQFFLLNSF, and IFIFLWFWFAFLLVATAGDFV. N-linked (GlcNAc...) asparagine glycosylation is present at N352.

It belongs to the pannexin family.

Its subcellular location is the cell membrane. It localises to the cell junction. The protein localises to the gap junction. Its function is as follows. Structural component of the gap junctions. Required for signals downstream of defecation clock. The chain is Innexin-16 (inx-16) from Caenorhabditis elegans.